The sequence spans 72 residues: SRY-related protein MG43 (72 aa).

The segment at residues 1–69 is a DNA-binding region (HMG box); it reads VKRPMNAFMV…KHMADYPDYK (69 aa).

It is found in the nucleus. The protein is SRY-related protein MG43 of Tarentola mauritanica (Common wall gecko).